A 186-amino-acid polypeptide reads, in one-letter code: Peptide deformylase (186 aa).

Residues C94 and H136 each contribute to the Fe cation site. Residue E137 is part of the active site. Fe cation is bound at residue H140.

The protein belongs to the polypeptide deformylase family. Fe(2+) is required as a cofactor.

The catalysed reaction is N-terminal N-formyl-L-methionyl-[peptide] + H2O = N-terminal L-methionyl-[peptide] + formate. In terms of biological role, removes the formyl group from the N-terminal Met of newly synthesized proteins. Requires at least a dipeptide for an efficient rate of reaction. N-terminal L-methionine is a prerequisite for activity but the enzyme has broad specificity at other positions. The protein is Peptide deformylase of Prosthecochloris aestuarii (strain DSM 271 / SK 413).